Consider the following 67-residue polypeptide: Large ribosomal subunit protein uL29 (67 aa).

The protein belongs to the universal ribosomal protein uL29 family.

This Alkaliphilus metalliredigens (strain QYMF) protein is Large ribosomal subunit protein uL29.